Here is a 64-residue protein sequence, read N- to C-terminus: Conotoxin Tx3.5-a (64 aa).

The N-terminal stretch at Met-1 to Ala-19 is a signal peptide. A propeptide spanning residues Leu-20–Arg-47 is cleaved from the precursor. 3 disulfides stabilise this stretch: Cys-49–Cys-58, Cys-50–Cys-62, and Cys-54–Cys-63. Cysteine amide is present on Cys-63.

This sequence belongs to the conotoxin M superfamily. Post-translationally, contains 3 disulfide bonds. Two peptides are produced from this precursor. Conotoxin Tx3.5-b is amidated at Cys-63, conotoxin Tx3.5-a has an unmodified C-terminus. As to expression, expressed by the venom duct. Is present in all duct parts with a highest content in part 2 (proximal of the venom bulb) and then decreases in concentration toward the end of the duct.

It is found in the secreted. This chain is Conotoxin Tx3.5-a, found in Conus textile (Cloth-of-gold cone).